The primary structure comprises 201 residues: Orotate phosphoribosyltransferase (201 aa).

113-121 (EDIITTGKS) contributes to the 5-phospho-alpha-D-ribose 1-diphosphate binding site. 2 residues coordinate orotate: Thr-117 and Arg-145.

The protein belongs to the purine/pyrimidine phosphoribosyltransferase family. PyrE subfamily. In terms of assembly, homodimer. Mg(2+) serves as cofactor.

The catalysed reaction is orotidine 5'-phosphate + diphosphate = orotate + 5-phospho-alpha-D-ribose 1-diphosphate. Its pathway is pyrimidine metabolism; UMP biosynthesis via de novo pathway; UMP from orotate: step 1/2. Catalyzes the transfer of a ribosyl phosphate group from 5-phosphoribose 1-diphosphate to orotate, leading to the formation of orotidine monophosphate (OMP). In Helicobacter pylori (strain Shi470), this protein is Orotate phosphoribosyltransferase.